We begin with the raw amino-acid sequence, 1199 residues long: Chromatin structure-remodeling complex subunit snf21 (1199 aa).

In terms of domain architecture, HSA spans 256-328 (QRSDRERRLK…AKQRLQALKE (73 aa)). The Helicase ATP-binding domain maps to 429 to 594 (ISLYNNHLNG…WALLNFVLPR (166 aa)). 442-449 (DEMGLGKT) serves as a coordination point for ATP. Positions 544 to 547 (DEGH) match the DEGH box motif. In terms of domain architecture, Helicase C-terminal spans 740 to 903 (LLDRILPKLF…STPEEREAFL (164 aa)). The tract at residues 1017-1059 (MESEARPTRGRPKRNIASVDETPALTLNGKPKKKRGPAPDTLT) is disordered. The Bromo domain occupies 1061 to 1171 (EHRSLLRRVC…TAMETKIEEL (111 aa)).

This sequence belongs to the SNF2/RAD54 helicase family. As to quaternary structure, component of the RSC complex composed of at least arp9, arp42, rsc1, rsc4, rsc7, rsc9, rsc58, sfh1, snf21, ssr1, ssr2, ssr3 and ssr4. The complex interacts with histone and histone variant components of centromeric chromatin.

The protein localises to the nucleus. Functionally, helicase. Component of the chromatin structure remodeling complex (RSC), which is involved in transcription regulation and nucleosome positioning. Controls particularly membrane and organelle development genes. This chain is Chromatin structure-remodeling complex subunit snf21 (snf21), found in Schizosaccharomyces pombe (strain 972 / ATCC 24843) (Fission yeast).